The following is a 205-amino-acid chain: Recombination protein RecR (205 aa).

The C4-type zinc finger occupies 59-74 (CARCNTFCEGGLCDIC). Residues 82–177 (RRLMVVHMPA…KVSRLSQGIP (96 aa)) enclose the Toprim domain.

It belongs to the RecR family.

May play a role in DNA repair. It seems to be involved in an RecBC-independent recombinational process of DNA repair. It may act with RecF and RecO. In Neisseria meningitidis serogroup A / serotype 4A (strain DSM 15465 / Z2491), this protein is Recombination protein RecR.